We begin with the raw amino-acid sequence, 424 residues long: Phosphomethylpyrimidine synthase (424 aa).

Substrate contacts are provided by residues M94, Y123, H162, 184 to 186, 225 to 228, and E264; these read SRG and NGMR. Residue H268 participates in Zn(2+) binding. Y291 contributes to the substrate binding site. H332 is a binding site for Zn(2+). Positions 406, 409, and 413 each coordinate [4Fe-4S] cluster.

Belongs to the ThiC family. It depends on [4Fe-4S] cluster as a cofactor.

The catalysed reaction is 5-amino-1-(5-phospho-beta-D-ribosyl)imidazole + S-adenosyl-L-methionine = 4-amino-2-methyl-5-(phosphooxymethyl)pyrimidine + CO + 5'-deoxyadenosine + formate + L-methionine + 3 H(+). It participates in cofactor biosynthesis; thiamine diphosphate biosynthesis. Functionally, catalyzes the synthesis of the hydroxymethylpyrimidine phosphate (HMP-P) moiety of thiamine from aminoimidazole ribotide (AIR) in a radical S-adenosyl-L-methionine (SAM)-dependent reaction. This Methanosphaerula palustris (strain ATCC BAA-1556 / DSM 19958 / E1-9c) protein is Phosphomethylpyrimidine synthase.